The primary structure comprises 390 residues: Probable tRNA pseudouridine synthase D 2 (390 aa).

The active-site Nucleophile is Asp93. A TRUD domain is found at 166-353; sequence YVLNYYGIQR…YGTRRKMVTP (188 aa).

This sequence belongs to the pseudouridine synthase TruD family.

It catalyses the reaction uridine(13) in tRNA = pseudouridine(13) in tRNA. Could be responsible for synthesis of pseudouridine from uracil-13 in transfer RNAs. The sequence is that of Probable tRNA pseudouridine synthase D 2 from Methanococcus maripaludis (strain DSM 14266 / JCM 13030 / NBRC 101832 / S2 / LL).